Here is a 296-residue protein sequence, read N- to C-terminus: tRNA dimethylallyltransferase (296 aa).

9–16 (GPTAVGKT) is a binding site for ATP. 11–16 (TAVGKT) provides a ligand contact to substrate. Residues 34-37 (DSRQ) form an interaction with substrate tRNA region.

The protein belongs to the IPP transferase family. In terms of assembly, monomer. Mg(2+) serves as cofactor.

The enzyme catalyses adenosine(37) in tRNA + dimethylallyl diphosphate = N(6)-dimethylallyladenosine(37) in tRNA + diphosphate. Catalyzes the transfer of a dimethylallyl group onto the adenine at position 37 in tRNAs that read codons beginning with uridine, leading to the formation of N6-(dimethylallyl)adenosine (i(6)A). In Chloroflexus aggregans (strain MD-66 / DSM 9485), this protein is tRNA dimethylallyltransferase.